The sequence spans 701 residues: Pseudouridylate synthase PUS7L (701 aa).

Ser79 is subject to Phosphoserine. Asp339 functions as the Nucleophile in the catalytic mechanism. Residues 424 to 647 enclose the TRUD domain; that stretch reads GFVNYYGPQR…PGCYRQILKH (224 aa).

This sequence belongs to the pseudouridine synthase TruD family.

The enzyme catalyses a uridine in mRNA = a pseudouridine in mRNA. Pseudouridine synthase that catalyzes pseudouridylation of mRNAs. The protein is Pseudouridylate synthase PUS7L of Homo sapiens (Human).